We begin with the raw amino-acid sequence, 296 residues long: MDHKNYLNHVIRGIYNDFQFLVDEGVVERSALDWVHANIHLQDGPASPVTAPAAQPVESSVPLPLPKRKSSVEKRAGSVASAVAAMSLSQNSGEKRTPEEPRKLPGVPAPQKQSEASSVNSSTEKLPPPPSYPGPNTAHKNVERVLAMYDFPGPDAGDLGFHAGEVIIVLEHVNNDWWRGELNGKEGIFPSNYVRLLEDSAVKAQPPPPPPQQNYPPAASSSAPPMQYQQTAYPPQQAPYPPVQAYPQAPQQPIVVAQPTEHKHSSTFKKIGSGLGSAFVFGAGATAGADLVNSIF.

Residues 46–138 form a disordered region; the sequence is ASPVTAPAAQ…PPSYPGPNTA (93 aa). Basic and acidic residues predominate over residues 93–103; that stretch reads GEKRTPEEPRK. Polar residues predominate over residues 111 to 124; the sequence is QKQSEASSVNSSTE. One can recognise an SH3 domain in the interval 140 to 199; it reads KNVERVLAMYDFPGPDAGDLGFHAGEVIIVLEHVNNDWWRGELNGKEGIFPSNYVRLLED. The interval 202-246 is disordered; the sequence is VKAQPPPPPPQQNYPPAASSSAPPMQYQQTAYPPQQAPYPPVQAY. Residues 205-214 are compositionally biased toward pro residues; that stretch reads QPPPPPPQQN. Low complexity predominate over residues 215–235; it reads YPPAASSSAPPMQYQQTAYPP.

The chain is Protein csh3 (csh3) from Schizosaccharomyces pombe (strain 972 / ATCC 24843) (Fission yeast).